The sequence spans 126 residues: UPF0102 protein Cphamn1_0017 (126 aa).

The protein belongs to the UPF0102 family.

This Chlorobium phaeobacteroides (strain BS1) protein is UPF0102 protein Cphamn1_0017.